The following is a 130-amino-acid chain: S-adenosylmethionine decarboxylase proenzyme (130 aa).

Catalysis depends on Ser-66, which acts as the Schiff-base intermediate with substrate; via pyruvic acid. Ser-66 is subject to Pyruvic acid (Ser); by autocatalysis. Catalysis depends on His-71, which acts as the Proton acceptor; for processing activity. Cys-86 serves as the catalytic Proton donor; for catalytic activity.

It belongs to the prokaryotic AdoMetDC family. Type 1 subfamily. Heterotetramer of two alpha and two beta chains arranged as a dimer of alpha/beta heterodimers. It depends on pyruvate as a cofactor. Post-translationally, is synthesized initially as an inactive proenzyme. Formation of the active enzyme involves a self-maturation process in which the active site pyruvoyl group is generated from an internal serine residue via an autocatalytic post-translational modification. Two non-identical subunits are generated from the proenzyme in this reaction, and the pyruvate is formed at the N-terminus of the alpha chain, which is derived from the carboxyl end of the proenzyme. The post-translation cleavage follows an unusual pathway, termed non-hydrolytic serinolysis, in which the side chain hydroxyl group of the serine supplies its oxygen atom to form the C-terminus of the beta chain, while the remainder of the serine residue undergoes an oxidative deamination to produce ammonia and the pyruvoyl group blocking the N-terminus of the alpha chain.

The catalysed reaction is S-adenosyl-L-methionine + H(+) = S-adenosyl 3-(methylsulfanyl)propylamine + CO2. The protein operates within amine and polyamine biosynthesis; S-adenosylmethioninamine biosynthesis; S-adenosylmethioninamine from S-adenosyl-L-methionine: step 1/1. Catalyzes the decarboxylation of S-adenosylmethionine to S-adenosylmethioninamine (dcAdoMet), the propylamine donor required for the synthesis of the polyamines spermine and spermidine from the diamine putrescine. The protein is S-adenosylmethionine decarboxylase proenzyme of Bacillus cereus (strain ATCC 10987 / NRS 248).